An 869-amino-acid chain; its full sequence is Probable inorganic carbon transporter subunit DabA (869 aa).

The segment at 1-32 (MSTATLEQRAKRGEAPRANDAGHCAHPADGAR) is disordered. A compositionally biased stretch (basic and acidic residues) spans 8-17 (QRAKRGEAPR). Zn(2+)-binding residues include Cys-376, Asp-378, His-555, and Cys-570.

This sequence belongs to the inorganic carbon transporter (TC 9.A.2) DabA family. Forms a complex with DabB. It depends on Zn(2+) as a cofactor.

The protein resides in the cell inner membrane. Its function is as follows. Part of an energy-coupled inorganic carbon pump. The sequence is that of Probable inorganic carbon transporter subunit DabA from Burkholderia multivorans (strain ATCC 17616 / 249).